Reading from the N-terminus, the 229-residue chain is Prolactin (229 aa).

Positions 1–30 (MDSKGSAQKGSRLLLLLVVSNLLLCQGVVS) are cleaved as a signal peptide. An intrachain disulfide couples C34 to C41. A phosphoserine mark is found at S56, S64, and S120. 2 disulfides stabilise this stretch: C88-C204 and C221-C229.

It belongs to the somatotropin/prolactin family. In terms of assembly, interacts with PRLR.

Its subcellular location is the secreted. Prolactin acts primarily on the mammary gland by promoting lactation. The polypeptide is Prolactin (PRL) (Capra hircus (Goat)).